The sequence spans 237 residues: Undecaprenyl-diphosphatase (237 aa).

7 helical membrane-spanning segments follow: residues 38–58 (QTAV…FDGI), 65–85 (WRII…GVLF), 92–112 (LFSS…ILMF), 126–146 (MSFL…FPGI), 166–186 (ALQY…ILGL), 191–211 (ITIL…YVLS), and 217–237 (GKIW…YLVG).

The protein belongs to the UppP family.

Its subcellular location is the cell inner membrane. The enzyme catalyses di-trans,octa-cis-undecaprenyl diphosphate + H2O = di-trans,octa-cis-undecaprenyl phosphate + phosphate + H(+). Catalyzes the dephosphorylation of undecaprenyl diphosphate (UPP). Confers resistance to bacitracin. This chain is Undecaprenyl-diphosphatase, found in Thermotoga petrophila (strain ATCC BAA-488 / DSM 13995 / JCM 10881 / RKU-1).